Consider the following 147-residue polypeptide: Cystatin-9-like (147 aa).

The signal sequence occupies residues 1 to 28; sequence MLGLPWKGGLSWALLLLLLGSQILLIYA. A disulfide bond links cysteine 98 and cysteine 108. N-linked (GlcNAc...) asparagine glycosylation is found at asparagine 117 and asparagine 139. Cysteines 122 and 142 form a disulfide.

It belongs to the cystatin family. As to expression, specifically expressed in testis.

Its subcellular location is the secreted. In Homo sapiens (Human), this protein is Cystatin-9-like (CST9L).